A 480-amino-acid chain; its full sequence is Cyclin L homolog cyl-1 (480 aa).

Residues 25-58 (PKEQNGNVEPKKEEDEKFESTYKQNENTQITPSS) are disordered. The span at 33–44 (EPKKEEDEKFES) shows a compositional bias: basic and acidic residues. The segment covering 45-58 (TYKQNENTQITPSS) has biased composition (polar residues). The Cyclin N-terminal domain maps to 91-230 (PSLVDGLSKE…RRILATLGFV (140 aa)). The interval 368–480 (KMAPDGEKST…ESSTPPRSRR (113 aa)) is disordered. Composition is skewed to basic and acidic residues over residues 384–409 (KDSR…GKKE) and 418–442 (NDRD…DEKK). A compositionally biased stretch (basic residues) spans 443–453 (DRRKRTRSRSR). A compositionally biased stretch (basic and acidic residues) spans 454–472 (DRKDKNRNRDVGKRYRKES).

The protein belongs to the cyclin family.

Involved in pre-mRNA splicing. Functions in association with cyclin-dependent kinases (CDKs). Involved in induction of expression of heat shock protein hsp-16.2 in response to heat shock. Plays a role in male tail development, perhaps acting together with cell cycle regulators cdc-25.2, cdk-1, cyb-3, and cyd-1. The sequence is that of Cyclin L homolog cyl-1 from Caenorhabditis elegans.